Here is a 70-residue protein sequence, read N- to C-terminus: Flexible pilin (70 aa).

The first 24 residues, Met1 to Ala24, serve as a signal peptide directing secretion.

As to quaternary structure, homomer.

It is found in the fimbrium. Functionally, fimbriae (also called pili) are polar filaments radiating from the surface of the bacterium to a length of 0.5-1.5 micrometers and numbering 100-300 per cell. They enable bacteria to colonize the epithelium of specific host organs. Flexible pili possess hemagglutinating function. This Aeromonas hydrophila protein is Flexible pilin (aerA).